Here is a 646-residue protein sequence, read N- to C-terminus: Long-chain fatty acid transport protein 1 (646 aa).

Residues 1–13 (MRAPGAGTASVAS) lie on the Extracellular side of the membrane. Residues 14 to 34 (LALLWFLGLPWTWSAAAAFCV) form a helical membrane-spanning segment. The Cytoplasmic portion of the chain corresponds to 35 to 646 (YVGGGGWRFL…ARICAGDFSL (612 aa)). The sufficient for oligomerization stretch occupies residues 191 to 475 (EVSEQLGKSL…YVSDSATNKK (285 aa)). Position 246 to 257 (246 to 257 (YIYTSGTTGLPK)) interacts with AMP.

Belongs to the ATP-dependent AMP-binding enzyme family. In terms of assembly, self-associates. May function as a homodimer. Interacts with EPRS1; mediates the translocation of SLC27A1 from the cytoplasm to the plasma membrane thereby increasing the uptake of long-chain fatty acids. Interacts with DGAT2 and this interaction is enhanced in the presence of ZFYVE1. Higher expression in white adipose tissue than in heart. Highest expression in skeletal muscle, heart and fat. Lower levels in brain, kidney, lung, liver and testis. No expression in spleen or intestine.

It is found in the cell membrane. Its subcellular location is the mitochondrion outer membrane. It localises to the endomembrane system. The protein localises to the cytoplasm. The catalysed reaction is a fatty acid(in) = a fatty acid(out). The enzyme catalyses (9Z)-octadecenoate(out) = (9Z)-octadecenoate(in). It catalyses the reaction hexadecanoate(out) = hexadecanoate(in). It carries out the reaction (5Z,8Z,11Z,14Z)-eicosatetraenoate(out) = (5Z,8Z,11Z,14Z)-eicosatetraenoate(in). The catalysed reaction is (9Z,12Z)-octadecadienoate(out) = (9Z,12Z)-octadecadienoate(in). The enzyme catalyses a long-chain fatty acid + ATP + CoA = a long-chain fatty acyl-CoA + AMP + diphosphate. It catalyses the reaction (5Z,8Z,11Z,14Z)-eicosatetraenoate + ATP + CoA = (5Z,8Z,11Z,14Z)-eicosatetraenoyl-CoA + AMP + diphosphate. It carries out the reaction a very long-chain fatty acid + ATP + CoA = a very long-chain fatty acyl-CoA + AMP + diphosphate. The catalysed reaction is tetracosanoate + ATP + CoA = tetracosanoyl-CoA + AMP + diphosphate. With respect to regulation, inhibited by Triacsin C. Both insulin and muscle contraction stimulate translocation to the plasma membrane in muscle, increasing fatty acid transport activity. Mediates the import of long-chain fatty acids (LCFA) into the cell by facilitating their transport at the plasma membrane. Also functions as an acyl-CoA ligase catalyzing the ATP-dependent formation of fatty acyl-CoA using LCFA and very-long-chain fatty acids (VLCFA) as substrates, which prevents fatty acid efflux from cells and might drive more fatty acid uptake. May act directly as a bona fide transporter, or alternatively, in a cytoplasmic or membrane-associated multimeric protein complex to trap and draw fatty acids towards accumulation. Plays a pivotal role in regulating available LCFA substrates from exogenous sources in tissues undergoing high levels of beta-oxidation or triglyceride synthesis. May be involved in regulation of cholesterol metabolism. Probably involved in fatty acid transport across the blood barrier. The protein is Long-chain fatty acid transport protein 1 of Mus musculus (Mouse).